A 347-amino-acid chain; its full sequence is Endophilin-A3 (347 aa).

Positions 1–21 are membrane-binding amphipathic helix; it reads MSVAGLKKQFHKASQLFSEKI. The BAR domain maps to 18–249; it reads SEKISGAEGT…LELRIALASQ (232 aa). The interval 60-87 is required for dimerization upon membrane association; it reads PNPAYRAKLGMLNTMSKLRGQVKATGYP. Residues 180–201 adopt a coiled-coil conformation; sequence EEEIRQAVEKFEESKELAERSM. Positions 218-254 are interaction with ARC; the sequence is FVEAALDYHRQSTEILQELQNKLELRIALASQVPRRD. The tract at residues 255-284 is disordered; sequence YMPKPVNTSSTNANGVEPSSSSKLTGTDIP. Positions 260 to 284 are enriched in polar residues; sequence VNTSSTNANGVEPSSSSKLTGTDIP. The SH3 domain maps to 285-344; the sequence is SDQPCCRGLYDFEPENEGELGFKEGDIITLTNQIDENWYEGMLRGESGFFPINYVEVIVP.

The protein belongs to the endophilin family. As to quaternary structure, interacts with SGIP1 and DYDC1. Interacts with FASLG. Interacts with ATXN2. Interacts with BIN2. Interacts with ARC, DNM1 and SYNJ1. Expressed at high level in testis and at lower level in brain and liver.

It is found in the cytoplasm. It localises to the early endosome membrane. Implicated in endocytosis. May recruit other proteins to membranes with high curvature. This Rattus norvegicus (Rat) protein is Endophilin-A3 (Sh3gl3).